A 361-amino-acid chain; its full sequence is S-adenosylmethionine:tRNA ribosyltransferase-isomerase (361 aa).

The protein belongs to the QueA family. Monomer.

It localises to the cytoplasm. The catalysed reaction is 7-aminomethyl-7-carbaguanosine(34) in tRNA + S-adenosyl-L-methionine = epoxyqueuosine(34) in tRNA + adenine + L-methionine + 2 H(+). The protein operates within tRNA modification; tRNA-queuosine biosynthesis. Its function is as follows. Transfers and isomerizes the ribose moiety from AdoMet to the 7-aminomethyl group of 7-deazaguanine (preQ1-tRNA) to give epoxyqueuosine (oQ-tRNA). This chain is S-adenosylmethionine:tRNA ribosyltransferase-isomerase, found in Haemophilus ducreyi (strain 35000HP / ATCC 700724).